The primary structure comprises 500 residues: Transcription factor-like 5 protein (500 aa).

Composition is skewed to pro residues over residues 1 to 12 (MSGPGPREPPPE) and 196 to 210 (AEPP…PPEP). Disordered regions lie at residues 1–34 (MSGP…ALGE) and 191–211 (FNSI…PEPG). The segment at 347–356 (MRQLDTNVER) is R3 epitope (recognized by Chagas's antibodies). The tract at residues 365–410 (VGEGATATQGAWQSSESSQANLGEQAQSGPQGGRSQRRERHNRMER) is disordered. The segment covering 370 to 393 (TATQGAWQSSESSQANLGEQAQSG) has biased composition (polar residues). The 51-residue stretch at 400-450 (QRRERHNRMERDRRRRIRICCDELNLLVPFCNAETDKATTLQWTTAFLKYI) folds into the bHLH domain. The R1 epitope (recognized by Chagas's antibodies) stretch occupies residues 481-500 (SLVTCPAQGSLQSSPSMEIK).

Efficient DNA binding requires dimerization with another bHLH protein. As to expression, isoform 3 is testis specific. Isoform 2 is pancreas specific.

It localises to the nucleus. Its function is as follows. Putative transcription factor. Isoform 3 may play a role in early spermatogenesis. This is Transcription factor-like 5 protein (TCFL5) from Homo sapiens (Human).